The sequence spans 129 residues: Small ribosomal subunit protein uS8 (129 aa).

This sequence belongs to the universal ribosomal protein uS8 family. In terms of assembly, part of the 30S ribosomal subunit.

In terms of biological role, one of the primary rRNA binding proteins, it binds directly to 16S rRNA central domain where it helps coordinate assembly of the platform of the 30S subunit. This chain is Small ribosomal subunit protein uS8, found in Archaeoglobus fulgidus (strain ATCC 49558 / DSM 4304 / JCM 9628 / NBRC 100126 / VC-16).